A 341-amino-acid polypeptide reads, in one-letter code: RNA 3'-terminal phosphate cyclase (341 aa).

Residues glutamine 102 and 283 to 287 (HLADQ) each bind ATP. The active-site Tele-AMP-histidine intermediate is the histidine 308.

It belongs to the RNA 3'-terminal cyclase family. Type 1 subfamily.

The protein localises to the cytoplasm. It carries out the reaction a 3'-end 3'-phospho-ribonucleotide-RNA + ATP = a 3'-end 2',3'-cyclophospho-ribonucleotide-RNA + AMP + diphosphate. In terms of biological role, catalyzes the conversion of 3'-phosphate to a 2',3'-cyclic phosphodiester at the end of RNA. The mechanism of action of the enzyme occurs in 3 steps: (A) adenylation of the enzyme by ATP; (B) transfer of adenylate to an RNA-N3'P to produce RNA-N3'PP5'A; (C) and attack of the adjacent 2'-hydroxyl on the 3'-phosphorus in the diester linkage to produce the cyclic end product. The biological role of this enzyme is unknown but it is likely to function in some aspects of cellular RNA processing. The chain is RNA 3'-terminal phosphate cyclase from Ectopseudomonas mendocina (strain ymp) (Pseudomonas mendocina).